Here is a 96-residue protein sequence, read N- to C-terminus: (4S)-4-hydroxy-5-phosphonooxypentane-2,3-dione isomerase (96 aa).

Residues 2 to 91 enclose the ABM domain; the sequence is HVTLVEINVH…MTGPRTKKVF (90 aa).

The protein belongs to the LsrG family. Homodimer.

The protein resides in the cytoplasm. The enzyme catalyses (2S)-2-hydroxy-3,4-dioxopentyl phosphate = 3-hydroxy-2,4-dioxopentyl phosphate. In terms of biological role, involved in the degradation of phospho-AI-2, thereby terminating induction of the lsr operon and closing the AI-2 signaling cycle. Catalyzes the conversion of (4S)-4-hydroxy-5-phosphonooxypentane-2,3-dione (P-DPD) to 3-hydroxy-5-phosphonooxypentane-2,4-dione (P-HPD). The chain is (4S)-4-hydroxy-5-phosphonooxypentane-2,3-dione isomerase from Salmonella typhimurium (strain LT2 / SGSC1412 / ATCC 700720).